A 121-amino-acid chain; its full sequence is Small ribosomal subunit protein uS13 (121 aa).

The disordered stretch occupies residues 99-121; that stretch reads RGQRTRTNSRTRKGPRRKIMKKK. Over residues 101–121 the composition is skewed to basic residues; that stretch reads QRTRTNSRTRKGPRRKIMKKK.

This sequence belongs to the universal ribosomal protein uS13 family. As to quaternary structure, part of the 30S ribosomal subunit. Forms a loose heterodimer with protein S19. Forms two bridges to the 50S subunit in the 70S ribosome.

Functionally, located at the top of the head of the 30S subunit, it contacts several helices of the 16S rRNA. In the 70S ribosome it contacts the 23S rRNA (bridge B1a) and protein L5 of the 50S subunit (bridge B1b), connecting the 2 subunits; these bridges are implicated in subunit movement. Contacts the tRNAs in the A and P-sites. This chain is Small ribosomal subunit protein uS13, found in Thermodesulfovibrio yellowstonii (strain ATCC 51303 / DSM 11347 / YP87).